A 325-amino-acid polypeptide reads, in one-letter code: Helicase VP6-A (325 aa).

Disordered regions lie at residues 1–122 and 185–230; these read MLLA…GATG and DLRR…EPAR. Basic and acidic residues-rich tracts occupy residues 8–18, 32–54, 61–79, and 92–105; these read VIKRSSEELKQ, EGGKEDKTEPKEESKAEGSKDGE, GQKEEGGKETKDADVDRRI, and LGERANENADRGDG. K106 is a binding site for ATP. Residues 106–122 show a composition bias toward gly residues; the sequence is KVGGGGGDADAGVGATG. Composition is skewed to basic and acidic residues over residues 185–203 and 211–229; these read DLRRKEKNGTHAKAVERGG and HGDAQREGVEEEKTSEEPA.

It belongs to the orbivirus VP6 family. As to quaternary structure, homohexamer.

It is found in the virion. It carries out the reaction ATP + H2O = ADP + phosphate + H(+). Functionally, ATP dependent RNA helicase essential for RNA packaging and viral transcription. Possesses ss- and dsRNA-binding capacity. In Bluetongue virus 17 (isolate USA) (BTV 17), this protein is Helicase VP6-A (Segment-9).